Consider the following 85-residue polypeptide: Small ribosomal subunit protein bS16 (85 aa).

The protein belongs to the bacterial ribosomal protein bS16 family.

The polypeptide is Small ribosomal subunit protein bS16 (Buchnera aphidicola subsp. Schizaphis graminum (strain Sg)).